Consider the following 362-residue polypeptide: 3-dehydroquinate synthase (362 aa).

Residues 70–75 (EGEQYK), 104–108 (GVIGD), 128–129 (TT), K141, K150, and 168–171 (TLTT) contribute to the NAD(+) site. The Zn(2+) site is built by E183, H246, and H263.

This sequence belongs to the sugar phosphate cyclases superfamily. Dehydroquinate synthase family. Co(2+) is required as a cofactor. Zn(2+) serves as cofactor. The cofactor is NAD(+).

The protein localises to the cytoplasm. The catalysed reaction is 7-phospho-2-dehydro-3-deoxy-D-arabino-heptonate = 3-dehydroquinate + phosphate. It functions in the pathway metabolic intermediate biosynthesis; chorismate biosynthesis; chorismate from D-erythrose 4-phosphate and phosphoenolpyruvate: step 2/7. Its function is as follows. Catalyzes the conversion of 3-deoxy-D-arabino-heptulosonate 7-phosphate (DAHP) to dehydroquinate (DHQ). The chain is 3-dehydroquinate synthase from Histophilus somni (strain 2336) (Haemophilus somnus).